We begin with the raw amino-acid sequence, 310 residues long: MYEIKQPFHSGYLQVSEIHQIYWEESGNPDGVPVIFLHGGPGAGASPECRGFFNPDVFRIVIIDQRGCGRSRPYACAEDNTTWDLVADIEKVREMLGIGKWLVFGGSWGSTLSLAYAQTHPERVKGLVLRGIFLCRPSETVWLNEAGGVSRIYPEQWQKFVAPIAENRRNRLIEAYHGLLFHQDEEVCLSAAKAWADWESYLIRFEPEEVDEDAYASLAIARLENHYFVNGGWLQGDRAILNNIGKIRHIPTIIVQGRYDLCTPMQSAWALSKAFPEAELRVVQAGHRAFDPPLVDALVQAVEDILPHLL.

An AB hydrolase-1 domain is found at 33–290 (PVIFLHGGPG…RVVQAGHRAF (258 aa)). The active-site Nucleophile is S107. The active site involves D260. H287 serves as the catalytic Proton donor.

It belongs to the peptidase S33 family.

The protein localises to the cytoplasm. It carries out the reaction Release of N-terminal proline from a peptide.. Specifically catalyzes the removal of N-terminal proline residues from peptides. This chain is Proline iminopeptidase (pip), found in Neisseria meningitidis serogroup B (strain ATCC BAA-335 / MC58).